A 134-amino-acid polypeptide reads, in one-letter code: Putative nickel-responsive regulator (134 aa).

Ni(2+) is bound by residues His78, His89, His91, and Cys97.

Belongs to the transcriptional regulatory CopG/NikR family. Ni(2+) serves as cofactor.

Its function is as follows. Transcriptional regulator. The protein is Putative nickel-responsive regulator of Chlorobium limicola (strain DSM 245 / NBRC 103803 / 6330).